We begin with the raw amino-acid sequence, 651 residues long: Forkhead box protein K2 (651 aa).

The segment covering 1 to 13 has biased composition (low complexity); sequence MAAAAALSGAGAP. Residues 1 to 29 form a disordered region; it reads MAAAAALSGAGAPPAGGGAGGGGSPPGGW. Residues 14–26 are compositionally biased toward gly residues; it reads PAGGGAGGGGSPP. S24 bears the Phosphoserine mark. In terms of domain architecture, FHA spans 48–119; that stretch reads VTIGRNSSQG…NGVFVDGVFQ (72 aa). A required for interaction with DVL2 and SUDS3 region spans residues 120–162; sequence RRGAPPLQLPRVCTFRFPSTNIKITFTALSSEKREKQEAPESP. R135 carries the omega-N-methylarginine modification. 2 disordered regions span residues 150 to 171 and 194 to 251; these read SEKR…PHIS and TISA…SKPP. Residues K152 and K155 each participate in a glycyl lysine isopeptide (Lys-Gly) (interchain with G-Cter in SUMO2) cross-link. Polar residues predominate over residues 194–203; it reads TISAANSCPS. Residue S230 is modified to Phosphoserine. The segment covering 233-249 has biased composition (basic and acidic residues); the sequence is ENEKEASGGDSPKDDSK. Residues 249-344 constitute a DNA-binding region (fork-head); sequence KPPYSYAQLI…EQAFRKRRPR (96 aa). The interval 291–309 is DNA-binding; major groove; sequence KGWQNSIRHNLSLNRYFIK. Residues L301, S302, N304, and F307 each coordinate Mg(2+). DNA-binding; minor groove regions lie at residues 319–323 and 339–344; these read KGSFW and RKRRPR. A disordered region spans residues 350-399; that stretch reads RTPLGPLSSRSAPASPNHAGVLSAHSSGAQTPESLSREGSPAPLEPEPGA. S364 bears the Phosphoserine mark. Residues 373-383 are compositionally biased toward polar residues; sequence AHSSGAQTPES. S389, S415, and S419 each carry phosphoserine. A Glycyl lysine isopeptide (Lys-Gly) (interchain with G-Cter in SUMO2) cross-link involves residue K518. Position 590 is a phosphoserine (S590). A compositionally biased stretch (polar residues) spans 601 to 614; sequence ASASLPTKRQNGDQ. A disordered region spans residues 601-623; the sequence is ASASLPTKRQNGDQAEQPELKRV. K624 is covalently cross-linked (Glycyl lysine isopeptide (Lys-Gly) (interchain with G-Cter in SUMO2)).

In terms of assembly, component of SIN3A-, but not SIN3B-, containing multiprotein complexes. Interacts with DVL1, DVL2 (when phosphorylated) and DVL3; the interaction induces DVL2 nuclear translocation. Interacts with SUDS3. Interacts with BAP1 (when phosphorylated); leading to recruit the PR-DUB complex and repress FOXK2 target genes. Accessory component of the polycomb repressive deubiquitinase (PR-DUB) complex, at least composed of BAP1, one of ASXL1, ASXL2 or (probably) ASXL3 and one of MBD5 or MBD6. The PR-DUB core associates with a number of accessory proteins, including FOXK1, FOXK2, KDM1B, HCFC1 and OGT. In terms of processing, hyperphosphorylated during mitosis by CDK1 and, to a lower extent, CDK2. Phosphorylation at Ser-364 and Ser-419 affects stability by promoting degradation. As to expression, expressed in a wide range of adult brain regions, namely the piriform cortex, the major islands of Calleja and cells lining the lateral ventricles, the bed nucleus of stria terminalis, the paraventricular thalamic nucleus, habenula and all structures of the hippocampus. Also present in the hypothalamus, cerebral cortex and in the Purkinje cell layer in the cerebellum. Additionally expressed in dopamine neurons of the substantia and more sparsely in the ventral tegmental area.

The protein localises to the nucleus. It is found in the cytoplasm. Transcriptional regulator involved in different processes such as glucose metabolism, aerobic glycolysis and autophagy. Recognizes and binds the forkhead DNA sequence motif (5'-GTAAACA-3') and can both act as a transcription activator or repressor, depending on the context. Together with FOXK1, acts as a key regulator of metabolic reprogramming towards aerobic glycolysis, a process in which glucose is converted to lactate in the presence of oxygen. Acts by promoting expression of enzymes for glycolysis (such as hexokinase-2 (HK2), phosphofructokinase, pyruvate kinase (PKLR) and lactate dehydrogenase), while suppressing further oxidation of pyruvate in the mitochondria by up-regulating pyruvate dehydrogenase kinases PDK1 and PDK4. Probably plays a role in gluconeogenesis during overnight fasting, when lactate from white adipose tissue and muscle is the main substrate. Together with FOXK1, acts as a negative regulator of autophagy in skeletal muscle: in response to starvation, enters the nucleus, binds the promoters of autophagy genes and represses their expression, preventing proteolysis of skeletal muscle proteins. In addition to the 5'-GTAAACA-3' DNA motif, also binds the 5'-TGANTCA-3' palindromic DNA motif, and co-associates with JUN/AP-1 to activate transcription. Also able to bind to a minimal DNA heteroduplex containing a G/T-mismatch with 5'-TRT[G/T]NB-3' sequence. Binds to NFAT-like motifs (purine-rich) in the IL2 promoter. Positively regulates WNT/beta-catenin signaling by translocating DVL proteins into the nucleus. Accessory component of the polycomb repressive deubiquitinase (PR-DUB) complex; recruits the PR-DUB complex to specific FOXK2-bound genes. This chain is Forkhead box protein K2, found in Mus musculus (Mouse).